The chain runs to 294 residues: 4-hydroxy-tetrahydrodipicolinate synthase (294 aa).

Thr-47 serves as a coordination point for pyruvate. Tyr-135 acts as the Proton donor/acceptor in catalysis. Lys-163 functions as the Schiff-base intermediate with substrate in the catalytic mechanism. A pyruvate-binding site is contributed by Ile-206.

The protein belongs to the DapA family. Homodimer.

It is found in the cytoplasm. It catalyses the reaction L-aspartate 4-semialdehyde + pyruvate = (2S,4S)-4-hydroxy-2,3,4,5-tetrahydrodipicolinate + H2O + H(+). The protein operates within amino-acid biosynthesis; L-lysine biosynthesis via DAP pathway; (S)-tetrahydrodipicolinate from L-aspartate: step 3/4. Catalyzes the condensation of (S)-aspartate-beta-semialdehyde [(S)-ASA] and pyruvate to 4-hydroxy-tetrahydrodipicolinate (HTPA). The polypeptide is 4-hydroxy-tetrahydrodipicolinate synthase (Staphylococcus haemolyticus (strain JCSC1435)).